The sequence spans 110 residues: G antigen 2E (110 aa).

The segment at 1-110 (MSWRGRSTYY…NPEEVKTPEE (110 aa)) is disordered. Composition is skewed to acidic residues over residues 32-45 (FSDEVEPATPEEGE) and 87-96 (ECEDGPDGQE).

Belongs to the GAGE family.

This chain is G antigen 2E (GAGE2E), found in Homo sapiens (Human).